The chain runs to 97 residues: Small ribosomal subunit protein bS20 (97 aa).

It belongs to the bacterial ribosomal protein bS20 family.

Functionally, binds directly to 16S ribosomal RNA. This is Small ribosomal subunit protein bS20 from Synechocystis sp. (strain ATCC 27184 / PCC 6803 / Kazusa).